Reading from the N-terminus, the 143-residue chain is Large ribosomal subunit protein uL16 (143 aa).

Residues 1 to 26 (MSMALLPRRVKYRKSQRGSRKGNATR) are disordered. A compositionally biased stretch (basic residues) spans 8–20 (RRVKYRKSQRGSR).

The protein belongs to the universal ribosomal protein uL16 family. As to quaternary structure, part of the 50S ribosomal subunit.

Its function is as follows. Binds 23S rRNA and is also seen to make contacts with the A and possibly P site tRNAs. This chain is Large ribosomal subunit protein uL16, found in Methylacidiphilum infernorum (isolate V4) (Methylokorus infernorum (strain V4)).